The following is a 127-amino-acid chain: Fluoride-specific ion channel FluC (127 aa).

Helical transmembrane passes span 4–24, 35–55, 71–91, and 103–123; these read LLLA…LLSM, LGTL…FAWF, TGFC…VFLL, and VFVN…LFSA. Na(+) contacts are provided by Gly75 and Thr78.

Belongs to the fluoride channel Fluc/FEX (TC 1.A.43) family.

Its subcellular location is the cell inner membrane. It catalyses the reaction fluoride(in) = fluoride(out). Na(+) is not transported, but it plays an essential structural role and its presence is essential for fluoride channel function. Fluoride-specific ion channel. Important for reducing fluoride concentration in the cell, thus reducing its toxicity. This Escherichia coli O17:K52:H18 (strain UMN026 / ExPEC) protein is Fluoride-specific ion channel FluC.